The chain runs to 328 residues: Stress response kinase A (328 aa).

Asp-201 functions as the Proton acceptor in the catalytic mechanism. Residues Asn-206 and Asp-217 each contribute to the Mg(2+) site. Asp-217 is a catalytic residue.

The protein belongs to the SrkA/RdoA protein kinase family. In terms of assembly, monomer. Requires Mg(2+) as cofactor.

It is found in the cytoplasm. It carries out the reaction L-seryl-[protein] + ATP = O-phospho-L-seryl-[protein] + ADP + H(+). The catalysed reaction is L-threonyl-[protein] + ATP = O-phospho-L-threonyl-[protein] + ADP + H(+). Functionally, a protein kinase that phosphorylates Ser and Thr residues. Probably acts to suppress the effects of stress linked to accumulation of reactive oxygen species. Probably involved in the extracytoplasmic stress response. This is Stress response kinase A from Escherichia coli O6:H1 (strain CFT073 / ATCC 700928 / UPEC).